Consider the following 522-residue polypeptide: Leucine-rich repeat transmembrane neuronal protein 1 (522 aa).

Positions 1-34 (MDFLLLGLCLYWLLRRPSGVVLCLLGACFQMLPA) are cleaved as a signal peptide. The 29-residue stretch at 35-63 (APSGCPQLCRCEGRLLYCEALNLTEAPHN) folds into the LRRNT domain. At 35–427 (APSGCPQLCR…HAENAVQIHK (393 aa)) the chain is on the extracellular side. Residues asparagine 56 and asparagine 63 are each glycosylated (N-linked (GlcNAc...) asparagine). LRR repeat units lie at residues 64 to 87 (LSGL…QFTG), 89 to 111 (MQLT…AFQK), 112 to 135 (LRRV…TFRP), 137 to 159 (PNLR…LFHG), 161 to 183 (RKLT…IFQD), 184 to 207 (CRSL…SFAG), 209 to 231 (FKLT…HFPR), 233 to 255 (ISLH…LDWV), 256 to 278 (WNLE…VFET), and 279 to 302 (VPHL…ILNS). An N-linked (GlcNAc...) asparagine glycan is attached at asparagine 130. One can recognise an LRRCT domain in the interval 314–365 (NLWDCGRNVCALASWLNNFQGRYDGNLQCASPEYAQGEDVLDAVYAFHLCED). Residue asparagine 380 is glycosylated (N-linked (GlcNAc...) asparagine). Positions 382–401 (SDLGPPASSATTLADGGEGQ) are disordered. Residues 428-448 (VVTGTMALIFSFLIVVLVLYV) traverse the membrane as a helical segment. At 449–522 (SWKCFPASLR…HQQPARECEV (74 aa)) the chain is on the cytoplasmic side.

The protein belongs to the LRRTM family. As to expression, predominantly expressed in forebrain regions including thalamus and cerebral cortex.

It localises to the cell membrane. It is found in the postsynaptic cell membrane. In terms of biological role, exhibits strong synaptogenic activity, restricted to excitatory presynaptic differentiation, acting at both pre- and postsynaptic level. This Homo sapiens (Human) protein is Leucine-rich repeat transmembrane neuronal protein 1 (LRRTM1).